A 212-amino-acid chain; its full sequence is Protein GrpE (212 aa).

The tract at residues 1 to 68 is disordered; it reads MAETSNNKTS…ELESAKKEIE (68 aa). Residues 9–30 show a composition bias toward basic and acidic residues; the sequence is TSEEAKANEKKSQSETLEESKL. Residues 40-60 are compositionally biased toward low complexity; sequence ETTQTESMETAETETSLQTEL.

It belongs to the GrpE family. As to quaternary structure, homodimer.

It is found in the cytoplasm. Its function is as follows. Participates actively in the response to hyperosmotic and heat shock by preventing the aggregation of stress-denatured proteins, in association with DnaK and GrpE. It is the nucleotide exchange factor for DnaK and may function as a thermosensor. Unfolded proteins bind initially to DnaJ; upon interaction with the DnaJ-bound protein, DnaK hydrolyzes its bound ATP, resulting in the formation of a stable complex. GrpE releases ADP from DnaK; ATP binding to DnaK triggers the release of the substrate protein, thus completing the reaction cycle. Several rounds of ATP-dependent interactions between DnaJ, DnaK and GrpE are required for fully efficient folding. The protein is Protein GrpE of Leptospira interrogans serogroup Icterohaemorrhagiae serovar copenhageni (strain Fiocruz L1-130).